Here is a 291-residue protein sequence, read N- to C-terminus: Pre-mRNA-splicing factor SPP381 (291 aa).

Disordered regions lie at residues 1–99 and 239–266; these read MSFR…PLPR and EKEK…YKIT. 2 stretches are compositionally biased toward polar residues: residues 28-41 and 52-62; these read QNVS…SLSH and TGKNRTPNDGQ. The span at 63–91 shows a compositional bias: acidic residues; sequence ESNESDGSPESDESPESEESSDNSDSSDS. The segment covering 239–258 has biased composition (basic and acidic residues); the sequence is EKEKLDHKKQRSAEKVEKSH.

It belongs to the SPP381 family. In terms of assembly, component of the U4/U6-U5 tri-snRNP complex composed of the U4, U6 and U5 snRNAs and at least PRP3, PRP4, PRP6, PRP8, PRP18, PRP31, PRP38, SNU13, SNU23, SNU66, SNU114, SPP381, SMB1, SMD1, SMD2, SMD3, SMX2, SMX3, LSM2, LSM3, LSM4, LSM5, LSM6, LSM7, LSM8, BRR2 and DIB1. Interacts with PRP38.

Its subcellular location is the nucleus. Functionally, component of the spliceosome and rRNA processing machinery. In association with the spliceosomal U4/U6.U5 tri-snRNP particle, required for splicing of pre-mRNA. The polypeptide is Pre-mRNA-splicing factor SPP381 (SPP381) (Saccharomyces cerevisiae (strain ATCC 204508 / S288c) (Baker's yeast)).